The following is a 552-amino-acid chain: Urocanate hydratase (552 aa).

NAD(+) is bound by residues 49 to 50 (GG), glutamine 127, 173 to 175 (GMG), aspartate 193, 239 to 240 (NA), 260 to 264 (QTSAH), 270 to 271 (YI), and tyrosine 319. The active site involves cysteine 407. Glycine 489 serves as a coordination point for NAD(+).

The protein belongs to the urocanase family. NAD(+) is required as a cofactor.

It is found in the cytoplasm. It catalyses the reaction 4-imidazolone-5-propanoate = trans-urocanate + H2O. It participates in amino-acid degradation; L-histidine degradation into L-glutamate; N-formimidoyl-L-glutamate from L-histidine: step 2/3. Its function is as follows. Catalyzes the conversion of urocanate to 4-imidazolone-5-propionate. In Bacillus anthracis (strain CDC 684 / NRRL 3495), this protein is Urocanate hydratase.